Here is a 440-residue protein sequence, read N- to C-terminus: Damage-control phosphatase ARMT1 (440 aa).

Residues Asp-252 and Asn-253 each contribute to the Mn(2+) site. 252 to 253 (DN) contributes to the substrate binding site. 2 residues coordinate S-adenosyl-L-methionine: Glu-257 and Asp-290. Asp-290 contributes to the Mn(2+) binding site. Substrate-binding positions include 366–370 (DLNYR) and Lys-403. The Subfamily III RTxK motif signature appears at 400 to 403 (RTLK).

Belongs to the damage-control phosphatase family. Sugar phosphate phosphatase III subfamily. Mn(2+) serves as cofactor. It depends on Ni(2+) as a cofactor. Post-translationally, automethylated.

It catalyses the reaction beta-D-fructose 1-phosphate + H2O = D-fructose + phosphate. It carries out the reaction beta-D-fructose 6-phosphate = dihydroxyacetone + D-glyceraldehyde 3-phosphate. The enzyme catalyses L-glutamyl-[protein] + S-adenosyl-L-methionine = [protein]-L-glutamate 5-O-methyl ester + S-adenosyl-L-homocysteine. Functionally, metal-dependent phosphatase that shows phosphatase activity against several substrates, including fructose-1-phosphate and fructose-6-phosphate. Its preference for fructose-1-phosphate, a strong glycating agent that causes DNA damage rather than a canonical yeast metabolite, suggests a damage-control function in hexose phosphate metabolism. Has also been shown to have O-methyltransferase activity that methylates glutamate residues of target proteins to form gamma-glutamyl methyl ester residues. Possibly methylates PCNA, suggesting it is involved in the DNA damage response. The protein is Damage-control phosphatase ARMT1 of Xenopus tropicalis (Western clawed frog).